Consider the following 585-residue polypeptide: Proline--tRNA ligase (585 aa).

This sequence belongs to the class-II aminoacyl-tRNA synthetase family. ProS type 1 subfamily. As to quaternary structure, homodimer.

Its subcellular location is the cytoplasm. The catalysed reaction is tRNA(Pro) + L-proline + ATP = L-prolyl-tRNA(Pro) + AMP + diphosphate. Its function is as follows. Catalyzes the attachment of proline to tRNA(Pro) in a two-step reaction: proline is first activated by ATP to form Pro-AMP and then transferred to the acceptor end of tRNA(Pro). As ProRS can inadvertently accommodate and process non-cognate amino acids such as alanine and cysteine, to avoid such errors it has two additional distinct editing activities against alanine. One activity is designated as 'pretransfer' editing and involves the tRNA(Pro)-independent hydrolysis of activated Ala-AMP. The other activity is designated 'posttransfer' editing and involves deacylation of mischarged Ala-tRNA(Pro). The misacylated Cys-tRNA(Pro) is not edited by ProRS. In Nocardia farcinica (strain IFM 10152), this protein is Proline--tRNA ligase.